A 423-amino-acid chain; its full sequence is Histidine--tRNA ligase (423 aa).

Belongs to the class-II aminoacyl-tRNA synthetase family. Homodimer.

The protein resides in the cytoplasm. It carries out the reaction tRNA(His) + L-histidine + ATP = L-histidyl-tRNA(His) + AMP + diphosphate + H(+). The protein is Histidine--tRNA ligase of Prochlorococcus marinus (strain NATL1A).